The sequence spans 180 residues: Nucleoside triphosphate/diphosphate phosphatase (180 aa).

Arginine 26 acts as the Proton donor in catalysis. Mg(2+) contacts are provided by asparagine 90, aspartate 106, aspartate 108, aspartate 110, aspartate 123, and glutamate 126.

It belongs to the Ntdp family. It depends on Mg(2+) as a cofactor.

The enzyme catalyses a ribonucleoside 5'-triphosphate + H2O = a ribonucleoside 5'-diphosphate + phosphate + H(+). The catalysed reaction is a ribonucleoside 5'-diphosphate + H2O = a ribonucleoside 5'-phosphate + phosphate + H(+). In terms of biological role, has nucleoside phosphatase activity towards nucleoside triphosphates and nucleoside diphosphates. This is Nucleoside triphosphate/diphosphate phosphatase from Staphylococcus epidermidis (strain ATCC 35984 / DSM 28319 / BCRC 17069 / CCUG 31568 / BM 3577 / RP62A).